Consider the following 208-residue polypeptide: Small ribosomal subunit protein uS4 (208 aa).

The S4 RNA-binding domain occupies 98-161; the sequence is QRLDNVVFRM…KSNPQVVRAL (64 aa).

The protein belongs to the universal ribosomal protein uS4 family. In terms of assembly, part of the 30S ribosomal subunit. Contacts protein S5. The interaction surface between S4 and S5 is involved in control of translational fidelity.

Functionally, one of the primary rRNA binding proteins, it binds directly to 16S rRNA where it nucleates assembly of the body of the 30S subunit. In terms of biological role, with S5 and S12 plays an important role in translational accuracy. The protein is Small ribosomal subunit protein uS4 of Aliarcobacter butzleri (strain RM4018) (Arcobacter butzleri).